A 237-amino-acid polypeptide reads, in one-letter code: MQKLAELYRGKAKTVYTTEDPDLLVLEFRNDTSAGDGARIEQFDRKGMVNNKFNHFIMSKLEEAGIPTQMVSLLSDNEVLVKKLEMVPVECVVRNRAAGSLVKRLGIEEGIELNPPLFDLFLKNDAMHDPMVNESYCKTFGWVSEENLARMKELSYKANDVLSKLFGDAGLILVDFKLEFGLFNGEVVLGDEFSPDGSRLWDKETLNKMDKDRFRQSLGGLIEAYEEVAHRIGVKLD.

This sequence belongs to the SAICAR synthetase family.

It carries out the reaction 5-amino-1-(5-phospho-D-ribosyl)imidazole-4-carboxylate + L-aspartate + ATP = (2S)-2-[5-amino-1-(5-phospho-beta-D-ribosyl)imidazole-4-carboxamido]succinate + ADP + phosphate + 2 H(+). Its pathway is purine metabolism; IMP biosynthesis via de novo pathway; 5-amino-1-(5-phospho-D-ribosyl)imidazole-4-carboxamide from 5-amino-1-(5-phospho-D-ribosyl)imidazole-4-carboxylate: step 1/2. In Pectobacterium atrosepticum (strain SCRI 1043 / ATCC BAA-672) (Erwinia carotovora subsp. atroseptica), this protein is Phosphoribosylaminoimidazole-succinocarboxamide synthase.